Here is a 256-residue protein sequence, read N- to C-terminus: Thiazole synthase (256 aa).

Lys95 acts as the Schiff-base intermediate with DXP in catalysis. Residues Gly156, 182–183 (AG), and 204–205 (NT) each bind 1-deoxy-D-xylulose 5-phosphate.

Belongs to the ThiG family. In terms of assembly, homotetramer. Forms heterodimers with either ThiH or ThiS.

Its subcellular location is the cytoplasm. It catalyses the reaction [ThiS sulfur-carrier protein]-C-terminal-Gly-aminoethanethioate + 2-iminoacetate + 1-deoxy-D-xylulose 5-phosphate = [ThiS sulfur-carrier protein]-C-terminal Gly-Gly + 2-[(2R,5Z)-2-carboxy-4-methylthiazol-5(2H)-ylidene]ethyl phosphate + 2 H2O + H(+). Its pathway is cofactor biosynthesis; thiamine diphosphate biosynthesis. Its function is as follows. Catalyzes the rearrangement of 1-deoxy-D-xylulose 5-phosphate (DXP) to produce the thiazole phosphate moiety of thiamine. Sulfur is provided by the thiocarboxylate moiety of the carrier protein ThiS. In vitro, sulfur can be provided by H(2)S. This chain is Thiazole synthase, found in Escherichia coli O17:K52:H18 (strain UMN026 / ExPEC).